The sequence spans 403 residues: Argininosuccinate synthase (403 aa).

ATP-binding positions include 10–18 (AYSGGVDTS) and alanine 38. Tyrosine 89 provides a ligand contact to L-citrulline. Glycine 119 lines the ATP pocket. L-aspartate is bound by residues threonine 121, asparagine 125, and aspartate 126. An L-citrulline-binding site is contributed by asparagine 125. L-citrulline-binding residues include arginine 129, serine 177, serine 186, glutamate 262, and tyrosine 274.

This sequence belongs to the argininosuccinate synthase family. Type 1 subfamily. As to quaternary structure, homotetramer.

The protein localises to the cytoplasm. It carries out the reaction L-citrulline + L-aspartate + ATP = 2-(N(omega)-L-arginino)succinate + AMP + diphosphate + H(+). Its pathway is amino-acid biosynthesis; L-arginine biosynthesis; L-arginine from L-ornithine and carbamoyl phosphate: step 2/3. This Parasynechococcus marenigrum (strain WH8102) protein is Argininosuccinate synthase.